The chain runs to 138 residues: Endonuclease V (138 aa).

The Nucleophile; via amide nitrogen role is filled by Thr2. Residue Glu23 is the Proton acceptor of the active site.

As to quaternary structure, monomer.

It catalyses the reaction Cleaves the N-glycosidic bond between the 5'-pyrimidine residue in cyclobutadipyrimidine (in DNA) and the corresponding deoxy-D-ribose residue.. The enzyme catalyses 2'-deoxyribonucleotide-(2'-deoxyribose 5'-phosphate)-2'-deoxyribonucleotide-DNA = a 3'-end 2'-deoxyribonucleotide-(2,3-dehydro-2,3-deoxyribose 5'-phosphate)-DNA + a 5'-end 5'-phospho-2'-deoxyribonucleoside-DNA + H(+). In terms of biological role, participates in the repair of UV-damaged DNA by excising pyrimidine dimers that are the major UV-lesions. DNA glycosylase activity hydrolyzes the glycosylic bond of the 5' pyrimidine of the dimer. This leaves apurinic/apyrimidic (AP) sites in the DNA. These AP sites are removed by the AP lyase activity which cleaves the intrapyrimidine phosphodiester bond. Catalysis proceeds via a protonated imine covalent intermediate between the alpha-amino group of the N-terminal threonine residue and the C1' of the deoxyribose sugar of the 5' pyrimidine at the dimer site. The protein is Endonuclease V of Enterobacteria phage T4 (Bacteriophage T4).